The chain runs to 376 residues: Glutamate 5-kinase (376 aa).

Position 15 (K15) interacts with ATP. The substrate site is built by S56, D143, and N155. 175–176 (SD) provides a ligand contact to ATP. The 78-residue stretch at 281-358 (KGTLTIDAGA…PDVMMILGIT (78 aa)) folds into the PUA domain.

Belongs to the glutamate 5-kinase family.

Its subcellular location is the cytoplasm. It carries out the reaction L-glutamate + ATP = L-glutamyl 5-phosphate + ADP. Its pathway is amino-acid biosynthesis; L-proline biosynthesis; L-glutamate 5-semialdehyde from L-glutamate: step 1/2. Functionally, catalyzes the transfer of a phosphate group to glutamate to form L-glutamate 5-phosphate. This is Glutamate 5-kinase from Rhodopseudomonas palustris (strain ATCC BAA-98 / CGA009).